The sequence spans 417 residues: NADH-quinone oxidoreductase subunit D (417 aa).

This sequence belongs to the complex I 49 kDa subunit family. In terms of assembly, NDH-1 is composed of 14 different subunits. Subunits NuoB, C, D, E, F, and G constitute the peripheral sector of the complex.

The protein resides in the cell inner membrane. It carries out the reaction a quinone + NADH + 5 H(+)(in) = a quinol + NAD(+) + 4 H(+)(out). NDH-1 shuttles electrons from NADH, via FMN and iron-sulfur (Fe-S) centers, to quinones in the respiratory chain. The immediate electron acceptor for the enzyme in this species is believed to be ubiquinone. Couples the redox reaction to proton translocation (for every two electrons transferred, four hydrogen ions are translocated across the cytoplasmic membrane), and thus conserves the redox energy in a proton gradient. The polypeptide is NADH-quinone oxidoreductase subunit D (Dechloromonas aromatica (strain RCB)).